Here is a 502-residue protein sequence, read N- to C-terminus: Probable cytosol aminopeptidase (502 aa).

Mn(2+) contacts are provided by Lys267 and Asp272. Lys279 is an active-site residue. Mn(2+)-binding residues include Asp290, Asp349, and Glu351. Arg353 is a catalytic residue.

Belongs to the peptidase M17 family. The cofactor is Mn(2+).

The protein resides in the cytoplasm. It catalyses the reaction Release of an N-terminal amino acid, Xaa-|-Yaa-, in which Xaa is preferably Leu, but may be other amino acids including Pro although not Arg or Lys, and Yaa may be Pro. Amino acid amides and methyl esters are also readily hydrolyzed, but rates on arylamides are exceedingly low.. The catalysed reaction is Release of an N-terminal amino acid, preferentially leucine, but not glutamic or aspartic acids.. Presumably involved in the processing and regular turnover of intracellular proteins. Catalyzes the removal of unsubstituted N-terminal amino acids from various peptides. This chain is Probable cytosol aminopeptidase, found in Aeromonas salmonicida (strain A449).